We begin with the raw amino-acid sequence, 268 residues long: Xyloglucan endotransglucosylase protein 7 (268 aa).

In terms of domain architecture, GH16 spans Met-1–Tyr-196. Residue Glu-82 is the Nucleophile of the active site. Glu-86 acts as the Proton donor in catalysis. Residue Glu-86 participates in xyloglucan binding. N-linked (GlcNAc...) asparagine glycosylation occurs at Asn-90. Residues His-99–Asn-101, Asn-109–Glu-111, Asp-175–Trp-176, and Gly-180 each bind xyloglucan. 2 disulfides stabilise this stretch: Cys-204-Cys-213 and Cys-251-Cys-265. Arg-256 provides a ligand contact to xyloglucan.

It belongs to the glycosyl hydrolase 16 family. XTH group 2 subfamily. Post-translationally, contains at least one intrachain disulfide bond essential for its enzymatic activity. Expressed at a very high level in flowers and stems (picked at anthesis), and at a lower level in ripe leaves and fruits.

The protein localises to the cytoplasm. The catalysed reaction is breaks a beta-(1-&gt;4) bond in the backbone of a xyloglucan and transfers the xyloglucanyl segment on to O-4 of the non-reducing terminal glucose residue of an acceptor, which can be a xyloglucan or an oligosaccharide of xyloglucan.. In terms of biological role, catalyzes xyloglucan endotransglycosylation (XET). Cleaves and religates xyloglucan polymers. Does not catalyze xyloglucan endohydrolysis (XEH). Probably involved in cell wall assembly and synthesis in fast growing tissues and in the maintenance of firmness in mature fruits. This Diospyros kaki (Kaki persimmon) protein is Xyloglucan endotransglucosylase protein 7.